A 569-amino-acid chain; its full sequence is MASMALSLTSSPTYSLSFRSLPSLKPLSKSQPSISLPSLRSNASKSPSLSHKHFLSPPSLLLPHKLKPISASSPTNPPPPPAPVPSPAPVSAPAQVQPWQGASIKPLLASILTGVIIWFIPTPEGVSRNAWQLLAIFLSTIVGIITQPLPLGAVALMGLGASVLTKTLTFSAAFSAFGDPIPWLIALAFFFARGFIKTGLGNRIAYQFVKLFGSSSLGLGYSLVFSEALLAPAIPSVSARAGGIFLPLVKSLCIACGSNVGDGTERKLGAWLMLTCFQTSVISSSMFLTAMAANPLSATLTFNTIGKAIGWMDWAKAAFVPGLVSLIVVPLLLYVVYPPEIKSSPDAPRLAKEKLDKMGPMTKNESIMAVTLLLTVGLWVFGGKLGVDAVTAAILGLSVLLITGVVTWKECLAESVAWDTLTWFAALIAMAGYLNKYGLITWFSENVVKVVGGLGLSWQMSFGVLVLLYFYSHYFFASGAAHIGAMFTAFLSVASALGTPPFLAAIVLSFLSNLMGGLTHYGIGSAPVFYGANYVPLPQWWGYGFLISIVNLIIWLGVGGLWWKAIGLW.

Residues 1 to 93 constitute a chloroplast transit peptide; sequence MASMALSLTS…VPSPAPVSAP (93 aa). Positions 23–74 are enriched in low complexity; that stretch reads SLKPLSKSQPSISLPSLRSNASKSPSLSHKHFLSPPSLLLPHKLKPISASSP. The interval 23-93 is disordered; that stretch reads SLKPLSKSQP…VPSPAPVSAP (71 aa). Residues 75 to 90 show a composition bias toward pro residues; that stretch reads TNPPPPPAPVPSPAPV. 12 consecutive transmembrane segments (helical) span residues 106-126, 134-154, 172-192, 241-261, 268-288, 317-337, 367-387, 388-408, 423-443, 450-470, 490-510, and 543-563; these read PLLASILTGVIIWFIPTPEGV, LAIFLSTIVGIITQPLPLGAV, AAFSAFGDPIPWLIALAFFFA, AGGIFLPLVKSLCIACGSNVG, LGAWLMLTCFQTSVISSSMFL, AAFVPGLVSLIVVPLLLYVVY, IMAVTLLLTVGLWVFGGKLGV, DAVTAAILGLSVLLITGVVTW, WFAALIAMAGYLNKYGLITWF, VVGGLGLSWQMSFGVLVLLYF, FLSVASALGTPPFLAAIVLSF, and YGFLISIVNLIIWLGVGGLWW.

The protein belongs to the SLC13A/DASS transporter (TC 2.A.47) family. DIT1 subfamily. Monomer. In terms of processing, the N-terminus is blocked. Expressed in leaves.

It is found in the plastid. The protein resides in the chloroplast inner membrane. Its function is as follows. 2-oxoglutarate/malate translocator that transports carbon skeletons into chloroplasts for net glutamate synthesis. This translocator exchanges malate for internal succinate, fumarate and 2-oxoglutarate but not for aspartate and glutamate. Involved with DIT2 in primary ammonia assimilation and in the re-assimilation of ammonia generated by the photorespiratory pathway. Imports 2-oxoglutarate into plastids as precursor for ammonia assimilation. 2-oxoglutarate is converted to glutamate, the end product of ammonia assimilation, which is exported to the cytosol by DIT2. The protein is Dicarboxylate transporter 1, chloroplastic (DIT1) of Spinacia oleracea (Spinach).